Here is a 466-residue protein sequence, read N- to C-terminus: Glycosyl hydrolase family 109 protein (466 aa).

Positions Met1–Ala30 form a signal peptide, tat-type signal. NAD(+)-binding positions include Ser59–Arg60, Asp81, Trp130–His133, Glu151–Val152, and Asn180. Tyr209 serves as a coordination point for substrate. Residue Ala241 to Trp245 coordinates NAD(+). Substrate contacts are provided by residues Arg246, Tyr258 to His261, and Tyr340. NAD(+) is bound at residue Tyr258.

The protein belongs to the Gfo/Idh/MocA family. Glycosyl hydrolase 109 subfamily. Requires NAD(+) as cofactor. Post-translationally, predicted to be exported by the Tat system. The position of the signal peptide cleavage has not been experimentally proven.

Functionally, glycosidase. The polypeptide is Glycosyl hydrolase family 109 protein (Parabacteroides distasonis (strain ATCC 8503 / DSM 20701 / CIP 104284 / JCM 5825 / NCTC 11152)).